The sequence spans 261 residues: Bidirectional sugar transporter SWEET1b (261 aa).

The Extracellular portion of the chain corresponds to 1–6 (MEDLAK). A helical membrane pass occupies residues 7–27 (FLFGVSGNVIALFLFLSPVPT). One can recognise a MtN3/slv 1 domain in the interval 7–95 (FLFGVSGNVI…VVFLVFASTH (89 aa)). The Cytoplasmic portion of the chain corresponds to 28 to 42 (FWRIIRRKSTEDFSG). A helical transmembrane segment spans residues 43 to 63 (VPYNMTLINCLLSAWYGLPFV). Residues 64–71 (SPNNILVS) are Extracellular-facing. The helical transmembrane segment at 72–92 (TINGAGAVIETAYVVVFLVFA) threads the bilayer. Residues 93–101 (STHKTRLRT) are Cytoplasmic-facing. The helical transmembrane segment at 102–122 (LGLAAAVASVFAAVALVSLLA) threads the bilayer. At 123–129 (LHGQHRK) the chain is on the extracellular side. A helical transmembrane segment spans residues 130–150 (LLCGVAATVCSICMYASPLSI). Residues 133-215 (GVAATVCSIC…VLYAIYRNNK (83 aa)) form the MtN3/slv 2 domain. Over 151–164 (MRLVIKTKSVEYMP) the chain is Cytoplasmic. The chain crosses the membrane as a helical span at residues 165–185 (FLMSLAVFLCGTSWFIYGLLG). Residues 186–189 (RDPF) are Extracellular-facing. Residues 190 to 210 (VTIPNGCGSFLGAVQLVLYAI) form a helical membrane-spanning segment. Topologically, residues 211–261 (YRNNKGAGGGSGGKQAGDDDVEMAEGRNNKVADGGAADDDSTAGGKAGTEV) are cytoplasmic. Residues 218 to 261 (GGGSGGKQAGDDDVEMAEGRNNKVADGGAADDDSTAGGKAGTEV) are disordered.

This sequence belongs to the SWEET sugar transporter family. In terms of assembly, forms homodimers. In terms of tissue distribution, highly expressed in leaves. Expressed at very low levels in roots, stems and panicles.

Its subcellular location is the cell membrane. It carries out the reaction D-glucose(out) = D-glucose(in). The enzyme catalyses D-galactose(in) = D-galactose(out). Mediates transport of sugars across the plasma membrane. Can transport glucose and galactose, but not fructose, mannose and sucrose. The sequence is that of Bidirectional sugar transporter SWEET1b (SWEET1B) from Oryza sativa subsp. japonica (Rice).